Here is a 962-residue protein sequence, read N- to C-terminus: Insulin-degrading enzyme homolog (962 aa).

The segment covering 1–10 (MVANEQQQQQ) has biased composition (low complexity). The disordered stretch occupies residues 1–21 (MVANEQQQQQQEEERKEVKLI). H74 lines the Zn(2+) pocket. The active-site Proton acceptor is the E77. The Zn(2+) site is built by H78 and E155.

Belongs to the peptidase M16 family. Homodimer. Requires Zn(2+) as cofactor.

It localises to the cytoplasm. This is Insulin-degrading enzyme homolog from Dictyostelium discoideum (Social amoeba).